The primary structure comprises 153 residues: CRIB domain-containing protein RIC4 (153 aa).

The CRIB domain maps to 99-112 (IGVPTNVKHVSHIG).

In terms of assembly, interacts with ARAC4/ROP2 and ARAC11/ROP1. Expressed in roots, leaves, stems, flowers, siliques and pollen.

Its subcellular location is the cell membrane. Functions as a downstream effector of Rho-related GTP binding proteins of the 'Rho of Plants' (ROPs) family. Participates in the propagation of ROP GTPase signals in specific cellular responses. Required for actin cortical microfilament assembly. Activated by ARAC4/ROP2 to promote the assembly of cortical actin microfilaments required for lobe formation and lateral expansion of pavement cells. Interaction with, and activation by ARAC4/ROP2 is inhibited by RIC1. Functions as a downstream effector of ARAC11/ROP1 to promote the assembly of apical F-actin associated with vesicle accumulation in the tip of the growing pollen tube. Counteracts the ARAC11/ROP1-RIC3 pathway, which activates calcium signaling that leads to apical F-actin disassembly associated with exocytosis, to control actin dynamics and pollen tube apical growth. Downstream of ARAC11/ROP1, is involved in the growth responses to the root-colonizing endophytic fungus P.indica. The chain is CRIB domain-containing protein RIC4 (RIC4) from Arabidopsis thaliana (Mouse-ear cress).